The following is a 188-amino-acid chain: Peptidyl-tRNA hydrolase (188 aa).

Residue Tyr-16 coordinates tRNA. The active-site Proton acceptor is His-21. Residues Phe-66, Asn-68, and Asn-114 each coordinate tRNA.

It belongs to the PTH family. Monomer.

Its subcellular location is the cytoplasm. It carries out the reaction an N-acyl-L-alpha-aminoacyl-tRNA + H2O = an N-acyl-L-amino acid + a tRNA + H(+). Hydrolyzes ribosome-free peptidyl-tRNAs (with 1 or more amino acids incorporated), which drop off the ribosome during protein synthesis, or as a result of ribosome stalling. Its function is as follows. Catalyzes the release of premature peptidyl moieties from peptidyl-tRNA molecules trapped in stalled 50S ribosomal subunits, and thus maintains levels of free tRNAs and 50S ribosomes. The protein is Peptidyl-tRNA hydrolase of Citrifermentans bemidjiense (strain ATCC BAA-1014 / DSM 16622 / JCM 12645 / Bem) (Geobacter bemidjiensis).